The chain runs to 122 residues: Large ribosomal subunit protein uL14 (122 aa).

Belongs to the universal ribosomal protein uL14 family. As to quaternary structure, part of the 50S ribosomal subunit. Forms a cluster with proteins L3 and L19. In the 70S ribosome, L14 and L19 interact and together make contacts with the 16S rRNA in bridges B5 and B8.

Functionally, binds to 23S rRNA. Forms part of two intersubunit bridges in the 70S ribosome. This Gloeothece citriformis (strain PCC 7424) (Cyanothece sp. (strain PCC 7424)) protein is Large ribosomal subunit protein uL14.